The primary structure comprises 1037 residues: MTVANTETHSAAKPSSTIGPWKLGETLGFGSTGKVQLAQHERTGHRTAVKVISKSIFNNNGNHSNDDSVLPYNIEREIVIMKLLSHPNVLSLYDVWETNNNLYLILEYAEKGELFNLLVDHGPLPEREAINCFRQIIIGISYCHALGIVHRDLKPENLLLDSFYNIKIADFGMAALQTDADLLETSCGSPHYAAPEIVSGLPYEGFASDVWSCGVILFALLTGRLPFDEENGNVRDLLLKVQKGQFEMPNDTEISRDAQDLIGKILVVDPRQRIKIRDILSHPLLKKYQTIKDSKSIKDLPRENTYLYPLADSNNHTSASIDDSILQNLVVLWHGRHADDIVSKLKENGTNKEKILYALLYRFKLDSVRGSNKKNRNKIKKTKKNKRSSTLSSSSSLLLNNRSIQSTPRRRTSKRHSREFSSSRKRSSFLLSSNPTDSSPIPLRSSKRITHINVASANTQATPSGVPNPHKRNSKKRSSKRLSYMPNTKRSSLTSKSLSNFTNLIDDDDWEYIEKDAKRTSSNFATLIDEIFEPEKFELAKREKAELQRKVQEAKRQSVNAQKINEDEFGSEVSDGMKELKKINDKVSSPLINYEFSQQELLQDIDTLLTNRYQLSSYTRPISRLDPGLTPVTETLPNNLKEKTALLQDTEKKIIETIRRSKFLGSLLNVRGGLSPGKSELAPIEESPIVSTTPLIYNDRMEPRRISDVEVPHFTRKSKHFTTANNRRSVLSLYAKDSIKDLNEFLIKEDPDLPPQGSTDNESRSEDPEIAESITDSRNIQYDEDDSKDGDNVNNDNILSDFPQGVGISQEYDMKDKNPNQSPISKSAEPTLVVKLPSLSSFQGKNASGLGLYQREPSKVTLPSLTSNNSSVGENIEDGAEKGTESEKIAASLSDDDLKEDNDKKDNDTVNAPTTVKKPPNSVLLKKFSKGKILELEIHAKIPEKRLYEGLHKLLEGWKQYGLKNLVFNITNMIITGKLVNDSILFLRSTLFEIMVLPNGDGRSLIKFNKKTGSTKTLTKLATEIQIILQKEGVLDK.

The Protein kinase domain maps to 21 to 285 (WKLGETLGFG…IRDILSHPLL (265 aa)). ATP contacts are provided by residues 27 to 35 (LGFGSTGKV) and Lys50. Asp152 acts as the Proton acceptor in catalysis. Residues 372–387 (NKKNRNKIKKTKKNKR) are compositionally biased toward basic residues. Positions 372–494 (NKKNRNKIKK…MPNTKRSSLT (123 aa)) are disordered. Low complexity predominate over residues 388-404 (SSTLSSSSSLLLNNRSI). Ser396 carries the phosphoserine modification. A compositionally biased stretch (basic residues) spans 408–427 (PRRRTSKRHSREFSSSRKRS). Positions 453-465 (NVASANTQATPSG) are enriched in polar residues. Basic residues predominate over residues 469 to 480 (PHKRNSKKRSSK). Residues 481 to 494 (RLSYMPNTKRSSLT) are compositionally biased toward low complexity. A phosphoserine mark is found at Ser675, Ser707, Ser777, Ser822, Ser825, and Ser871. Disordered regions lie at residues 746–804 (LIKE…DFPQ), 810–829 (QEYD…KSAE), and 861–918 (TLPS…TVKK). Positions 861–873 (TLPSLTSNNSSVG) are enriched in polar residues. The span at 879-888 (GAEKGTESEK) shows a compositional bias: basic and acidic residues.

This sequence belongs to the protein kinase superfamily. CAMK Ser/Thr protein kinase family. NIM1 subfamily. In terms of assembly, interacts with septin proteins, primarily with CDC11. Interacts with SWE1 and NAP1.

Its subcellular location is the bud neck. The enzyme catalyses L-seryl-[protein] + ATP = O-phospho-L-seryl-[protein] + ADP + H(+). It catalyses the reaction L-threonyl-[protein] + ATP = O-phospho-L-threonyl-[protein] + ADP + H(+). Its function is as follows. Involved in regulation of bud growth during cell cycle and in septin organization. Plays a role in cell wall synthesis. The chain is Probable serine/threonine-protein kinase KCC4 (KCC4) from Saccharomyces cerevisiae (strain ATCC 204508 / S288c) (Baker's yeast).